The chain runs to 380 residues: MAGVLRVALVAGEASGDILGASLMQALKAVRPDIEFIGVGGPRMQAEGLQSYFPMERLAVMGLFEVLGRLPELLLRRRWLIRDLLEARPDLYIGIDAPDFNLGIELRLRRAGIRTVHYVSPSVWAWRQKRVLKIRQACDLMLTLFPFEAEFYEARNVPVRFVGHPLADQIPLQTDRDAARAALDLTDGETIVALLPGSRGGELARLGPLFIEAAERLLALHAGPLRFVVPCASPERRRQLEEMLSHTRRDLPVMLLDGRSHEALAACDAVLIASGTATLEALLYKRPMVVAYRLAPLTYKVARHLVKTPFFSLPNLLAGRALVPELLQDRATPEALAEALIPLLEIGGEQTECFDAIHRSLRRDASRRAAESVLELAERA.

This sequence belongs to the LpxB family.

It carries out the reaction a lipid X + a UDP-2-N,3-O-bis[(3R)-3-hydroxyacyl]-alpha-D-glucosamine = a lipid A disaccharide + UDP + H(+). The protein operates within bacterial outer membrane biogenesis; LPS lipid A biosynthesis. Its function is as follows. Condensation of UDP-2,3-diacylglucosamine and 2,3-diacylglucosamine-1-phosphate to form lipid A disaccharide, a precursor of lipid A, a phosphorylated glycolipid that anchors the lipopolysaccharide to the outer membrane of the cell. The polypeptide is Lipid-A-disaccharide synthase (Azotobacter vinelandii (strain DJ / ATCC BAA-1303)).